Here is a 278-residue protein sequence, read N- to C-terminus: 2-dehydro-3-deoxyphosphooctonate aldolase (278 aa).

Belongs to the KdsA family.

It is found in the cytoplasm. It catalyses the reaction D-arabinose 5-phosphate + phosphoenolpyruvate + H2O = 3-deoxy-alpha-D-manno-2-octulosonate-8-phosphate + phosphate. It functions in the pathway carbohydrate biosynthesis; 3-deoxy-D-manno-octulosonate biosynthesis; 3-deoxy-D-manno-octulosonate from D-ribulose 5-phosphate: step 2/3. The protein operates within bacterial outer membrane biogenesis; lipopolysaccharide biosynthesis. The sequence is that of 2-dehydro-3-deoxyphosphooctonate aldolase from Koribacter versatilis (strain Ellin345).